A 129-amino-acid chain; its full sequence is L-ectoine synthase (129 aa).

This sequence belongs to the ectoine synthase family.

The catalysed reaction is (2S)-4-acetamido-2-aminobutanoate = L-ectoine + H2O. It participates in amine and polyamine biosynthesis; ectoine biosynthesis; L-ectoine from L-aspartate 4-semialdehyde: step 3/3. Functionally, catalyzes the circularization of gamma-N-acetyl-alpha,gamma-diaminobutyric acid (ADABA) to ectoine (1,4,5,6-tetrahydro-2-methyl-4-pyrimidine carboxylic acid), which is an excellent osmoprotectant. The polypeptide is L-ectoine synthase (Mycobacterium sp. (strain KMS)).